Here is a 169-residue protein sequence, read N- to C-terminus: Thaumatin-like pathogenesis-related protein 2 (169 aa).

Positions 1 to 21 (MATSSAVLFFLLAVFAAGASA) are cleaved as a signal peptide.

It belongs to the thaumatin family.

In terms of biological role, associated with resistance against stem rust fungi. This Avena sativa (Oat) protein is Thaumatin-like pathogenesis-related protein 2 (RASTL-2).